Reading from the N-terminus, the 539-residue chain is Phosphoenolpyruvate carboxykinase (ATP) (539 aa).

3 residues coordinate substrate: Arg64, Tyr206, and Lys212. ATP-binding positions include Lys212, His231, and 247–255; that span reads GLSGTGKTT. Mn(2+) contacts are provided by Lys212 and His231. Asp268 serves as a coordination point for Mn(2+). Residues Glu296, Arg332, 448–449, and Thr454 contribute to the ATP site; that span reads RI. Position 332 (Arg332) interacts with substrate.

This sequence belongs to the phosphoenolpyruvate carboxykinase (ATP) family. Monomer. It depends on Mn(2+) as a cofactor.

Its subcellular location is the cytoplasm. The enzyme catalyses oxaloacetate + ATP = phosphoenolpyruvate + ADP + CO2. It participates in carbohydrate biosynthesis; gluconeogenesis. Its function is as follows. Involved in the gluconeogenesis. Catalyzes the conversion of oxaloacetate (OAA) to phosphoenolpyruvate (PEP) through direct phosphoryl transfer between the nucleoside triphosphate and OAA. This Salmonella gallinarum (strain 287/91 / NCTC 13346) protein is Phosphoenolpyruvate carboxykinase (ATP).